The sequence spans 215 residues: E3 ubiquitin-protein ligase znrf1 (215 aa).

2 disordered regions span residues 1 to 39 and 66 to 96; these read MGGK…PGGT and YTPR…ETGG. A lipid anchor (N-myristoyl glycine) is attached at glycine 2. Residues 172-213 form an RING-type; atypical zinc finger; sequence CVICLEELQQGDTIARLPCLCIYHKSCIDSWFEINRSCPEHP.

It is found in the endosome. The protein resides in the lysosome. Its subcellular location is the membrane. The catalysed reaction is S-ubiquitinyl-[E2 ubiquitin-conjugating enzyme]-L-cysteine + [acceptor protein]-L-lysine = [E2 ubiquitin-conjugating enzyme]-L-cysteine + N(6)-ubiquitinyl-[acceptor protein]-L-lysine.. Its pathway is protein modification; protein ubiquitination. Functionally, E3 ubiquitin-protein ligase that plays a role in neuron cells differentiation. Plays a role in the establishment and maintenance of neuronal transmission and plasticity. In Danio rerio (Zebrafish), this protein is E3 ubiquitin-protein ligase znrf1 (znrf1).